A 32-amino-acid polypeptide reads, in one-letter code: Putative leucine-rich repeat protein PS14 (32 aa).

This Pinus strobus (Eastern white pine) protein is Putative leucine-rich repeat protein PS14.